The primary structure comprises 316 residues: Ribosomal RNA small subunit methyltransferase H (316 aa).

Residues 35 to 37 (GGH), D55, F80, D102, and Q109 contribute to the S-adenosyl-L-methionine site.

Belongs to the methyltransferase superfamily. RsmH family.

It is found in the cytoplasm. It catalyses the reaction cytidine(1402) in 16S rRNA + S-adenosyl-L-methionine = N(4)-methylcytidine(1402) in 16S rRNA + S-adenosyl-L-homocysteine + H(+). Functionally, specifically methylates the N4 position of cytidine in position 1402 (C1402) of 16S rRNA. This is Ribosomal RNA small subunit methyltransferase H from Colwellia psychrerythraea (strain 34H / ATCC BAA-681) (Vibrio psychroerythus).